Reading from the N-terminus, the 87-residue chain is NAD(P)H-quinone oxidoreductase subunit O (87 aa).

The segment covering 1-10 has biased composition (basic and acidic residues); it reads MSEQTGKVDD. Residues 1–26 form a disordered region; that stretch reads MSEQTGKVDDSQSPPKVQKKLRKGDL.

This sequence belongs to the complex I NdhO subunit family. As to quaternary structure, NDH-1 can be composed of about 15 different subunits; different subcomplexes with different compositions have been identified which probably have different functions.

It is found in the cellular thylakoid membrane. It carries out the reaction a plastoquinone + NADH + (n+1) H(+)(in) = a plastoquinol + NAD(+) + n H(+)(out). It catalyses the reaction a plastoquinone + NADPH + (n+1) H(+)(in) = a plastoquinol + NADP(+) + n H(+)(out). In terms of biological role, NDH-1 shuttles electrons from an unknown electron donor, via FMN and iron-sulfur (Fe-S) centers, to quinones in the respiratory and/or the photosynthetic chain. The immediate electron acceptor for the enzyme in this species is believed to be plastoquinone. Couples the redox reaction to proton translocation, and thus conserves the redox energy in a proton gradient. Cyanobacterial NDH-1 also plays a role in inorganic carbon-concentration. This is NAD(P)H-quinone oxidoreductase subunit O from Prochlorococcus marinus (strain NATL1A).